The chain runs to 227 residues: Translation initiation factor 6 (227 aa).

It belongs to the eIF-6 family.

In terms of biological role, binds to the 50S ribosomal subunit and prevents its association with the 30S ribosomal subunit to form the 70S initiation complex. The chain is Translation initiation factor 6 from Methanococcus maripaludis (strain C6 / ATCC BAA-1332).